A 458-amino-acid polypeptide reads, in one-letter code: Putative non-structural protein 2 (458 aa).

Residues 1-12 (MSDTNEENRDEP) show a composition bias toward basic and acidic residues. Residues 1–27 (MSDTNEENRDEPTVVIVGPNDAQTETT) form a disordered region.

In Micromonas pusilla (Picoplanktonic green alga), this protein is Putative non-structural protein 2 (S8).